The sequence spans 194 residues: MTENSTSTPAAKPKRAKAAKKSTDHPKYSDMIVAAIQAEKNRAGSSRQSIQKYIKSHYKVGENADSQIKLSIKRLVTTGVLKQTKGVGASGSFRLAKGDEPKRSVAFKKTKKEVKKVATPKKAAKPKKAASKAPSKKPKATPVKKAKKKPAATPKKAKKPKIVKVKPVKASKPKKAKPVKPKAKSSAKRASKKK.

N-acetylmethionine is present on Met-1. The interval 1 to 26 is disordered; sequence MTENSTSTPAAKPKRAKAAKKSTDHP. An N-acetylthreonine; in Histone H1.0, N-terminally processed modification is found at Thr-2. The H15 domain maps to 24 to 97; that stretch reads DHPKYSDMIV…GASGSFRLAK (74 aa). Citrulline is present on Arg-42. The disordered stretch occupies residues 86-194; the sequence is GVGASGSFRL…SSAKRASKKK (109 aa). At Ser-104 the chain carries ADP-ribosylserine. The segment covering 105 to 194 has biased composition (basic residues); that stretch reads VAFKKTKKEV…SSAKRASKKK (90 aa).

The protein belongs to the histone H1/H5 family. In terms of processing, ADP-ribosylated on Ser-104 in response to DNA damage.

It localises to the nucleus. The protein resides in the chromosome. Histones H1 are necessary for the condensation of nucleosome chains into higher-order structures. The histones H1.0 are found in cells that are in terminal stages of differentiation or that have low rates of cell division. This chain is Histone H1.0 (H1-0), found in Rattus norvegicus (Rat).